Here is a 334-residue protein sequence, read N- to C-terminus: ADP-L-glycero-D-manno-heptose-6-epimerase (334 aa).

Residues 11–12 (FI), 32–33 (DN), Lys-39, Lys-54, 77–81 (QGACS), and Asn-94 contribute to the NADP(+) site. Tyr-141 functions as the Proton acceptor in the catalytic mechanism. NADP(+) is bound at residue Lys-145. Residue Asn-171 coordinates substrate. NADP(+) is bound by residues Val-172 and Lys-180. The active-site Proton acceptor is Lys-180. Substrate-binding positions include Arg-182, His-189, 203 to 206 (FGSN), Arg-216, and Tyr-295.

This sequence belongs to the NAD(P)-dependent epimerase/dehydratase family. HldD subfamily. Homopentamer. NADP(+) is required as a cofactor.

The catalysed reaction is ADP-D-glycero-beta-D-manno-heptose = ADP-L-glycero-beta-D-manno-heptose. The protein operates within nucleotide-sugar biosynthesis; ADP-L-glycero-beta-D-manno-heptose biosynthesis; ADP-L-glycero-beta-D-manno-heptose from D-glycero-beta-D-manno-heptose 7-phosphate: step 4/4. Its function is as follows. Catalyzes the interconversion between ADP-D-glycero-beta-D-manno-heptose and ADP-L-glycero-beta-D-manno-heptose via an epimerization at carbon 6 of the heptose. The chain is ADP-L-glycero-D-manno-heptose-6-epimerase from Neisseria gonorrhoeae (strain ATCC 700825 / FA 1090).